We begin with the raw amino-acid sequence, 275 residues long: MGEFYHELTLSPSSYLELFSDFLLEATGEGIEEEGNSIIVRSDQDLSWLIEALQEFCQTLSARVSEEVNFSHSLTWKRNEDWIERYRQSIQPIECAPFYVRPSWHPPKPDLIDLLIDPALAFGSGHHGTTNGCLACLGALELEGKRVLDVGCGSGILAIASAKKGAIVEMCDTDELAVGEALKNASLNQVIASKVWIGSVGDAEGEYDLIIANILAAILIMLSPWLKERLKPGARLILSGILGPYKEDVLRKFGGFTLEKELLCEEWVTLQLRKN.

S-adenosyl-L-methionine-binding residues include threonine 130, glycine 151, aspartate 172, and asparagine 213.

This sequence belongs to the methyltransferase superfamily. PrmA family.

The protein resides in the cytoplasm. It carries out the reaction L-lysyl-[protein] + 3 S-adenosyl-L-methionine = N(6),N(6),N(6)-trimethyl-L-lysyl-[protein] + 3 S-adenosyl-L-homocysteine + 3 H(+). In terms of biological role, methylates ribosomal protein L11. This chain is Ribosomal protein L11 methyltransferase, found in Wolinella succinogenes (strain ATCC 29543 / DSM 1740 / CCUG 13145 / JCM 31913 / LMG 7466 / NCTC 11488 / FDC 602W) (Vibrio succinogenes).